We begin with the raw amino-acid sequence, 533 residues long: Zinc finger protein 692 (533 aa).

2 disordered regions span residues 124–251 (SLIP…PATL) and 290–310 (TESL…TCDE). Positions 149 to 178 (EARRKQEAEGLECEHRERTQETRLSRRVEP) are enriched in basic and acidic residues. Over residues 190-208 (QVVEEEEEEEEEEEEEELL) the composition is skewed to acidic residues. Ser-233 is subject to Phosphoserine. Polar residues predominate over residues 290 to 305 (TESLDSPGSQAQSAPN). 5 C2H2-type zinc fingers span residues 329-354 (MPCD…KYQH), 360-384 (FCCP…VKLH), 390-412 (YICE…RRIH), 418-440 (LQCE…RRKH), and 449-472 (FPCE…SKSH). The residue at position 471 (Ser-471) is a Phosphoserine. The tract at residues 478-533 (VQESPGSLGSSPSISAPEPLQSPEGTSFSTSYDSNPAPSTSISSPGVPAPRNTEKS) is disordered. Residues 481–492 (SPGSLGSSPSIS) are compositionally biased toward low complexity. Polar residues predominate over residues 500-521 (PEGTSFSTSYDSNPAPSTSISS).

This sequence belongs to the krueppel C2H2-type zinc-finger protein family. In terms of processing, phosphorylation at Ser-471 results in loss of DNA-binding activity.

The protein resides in the nucleus. Its function is as follows. May act as an transcriptional repressor for PCK1 gene expression, in turns may participate in the hepatic gluconeogenesis regulation through the activated AMPK signaling pathway. The chain is Zinc finger protein 692 from Rattus norvegicus (Rat).